We begin with the raw amino-acid sequence, 365 residues long: Casein kinase I homolog hhp1 (365 aa).

A Protein kinase domain is found at 11 to 279 (YRIGRKIGSG…YLRKLFRDLF (269 aa)). ATP-binding positions include 17–25 (IGSGSFGDI) and Lys-40. Residue Asp-130 is the Proton acceptor of the active site. Residues 301–311 (DQQHQQQLQQQ) are compositionally biased toward low complexity. Residues 301–365 (DQQHQQQLQQ…TGAQYINRPN (65 aa)) are disordered. The segment covering 343-365 (INTTVPVINDPSATGAQYINRPN) has biased composition (polar residues).

Belongs to the protein kinase superfamily. CK1 Ser/Thr protein kinase family. Casein kinase I subfamily.

The protein localises to the nucleus. The catalysed reaction is L-seryl-[protein] + ATP = O-phospho-L-seryl-[protein] + ADP + H(+). It catalyses the reaction L-threonyl-[protein] + ATP = O-phospho-L-threonyl-[protein] + ADP + H(+). In terms of biological role, involved in DNA repair. Has a probable role in repairing alkylated DNA and may regulate the activity of protein(s) involved in double strand break repair caused by gamma rays. This Schizosaccharomyces pombe (strain 972 / ATCC 24843) (Fission yeast) protein is Casein kinase I homolog hhp1 (hhp1).